We begin with the raw amino-acid sequence, 162 residues long: Regulator of sigma D (162 aa).

It belongs to the Rsd/AlgQ family. In terms of assembly, interacts with RpoD.

Its subcellular location is the cytoplasm. Binds RpoD and negatively regulates RpoD-mediated transcription activation by preventing the interaction between the primary sigma factor RpoD with the catalytic core of the RNA polymerase and with promoter DNA. May be involved in replacement of the RNA polymerase sigma subunit from RpoD to RpoS during the transition from exponential growth to the stationary phase. This is Regulator of sigma D from Salmonella arizonae (strain ATCC BAA-731 / CDC346-86 / RSK2980).